The primary structure comprises 194 residues: Probable proteasome subunit beta type-4 (194 aa).

It belongs to the peptidase T1B family. The 26S proteasome consists of a 20S proteasome core and two 19S regulatory subunits. The 20S proteasome core is composed of 28 subunits that are arranged in four stacked rings, resulting in a barrel-shaped structure. The two end rings are each formed by seven alpha subunits, and the two central rings are each formed by seven beta subunits. The catalytic chamber with the active sites is on the inside of the barrel.

The protein resides in the cytoplasm. It localises to the nucleus. Functionally, non-catalytic component of the proteasome, a multicatalytic proteinase complex which is characterized by its ability to cleave peptides with Arg, Phe, Tyr, Leu, and Glu adjacent to the leaving group at neutral or slightly basic pH. The proteasome has an ATP-dependent proteolytic activity. The sequence is that of Probable proteasome subunit beta type-4 from Schizosaccharomyces pombe (strain 972 / ATCC 24843) (Fission yeast).